A 334-amino-acid polypeptide reads, in one-letter code: Malate dehydrogenase (334 aa).

An NAD(+)-binding site is contributed by 17-23 (GAAGQIG). Substrate contacts are provided by arginine 98 and arginine 104. Residues asparagine 111, glutamine 118, and 135–137 (VGN) contribute to the NAD(+) site. Residues asparagine 137 and arginine 168 each contribute to the substrate site. The active-site Proton acceptor is the histidine 193.

Belongs to the LDH/MDH superfamily. MDH type 2 family.

The enzyme catalyses (S)-malate + NAD(+) = oxaloacetate + NADH + H(+). In terms of biological role, catalyzes the reversible oxidation of malate to oxaloacetate. The polypeptide is Malate dehydrogenase (Deinococcus geothermalis (strain DSM 11300 / CIP 105573 / AG-3a)).